Reading from the N-terminus, the 377-residue chain is Queuine tRNA-ribosyltransferase (377 aa).

D89 functions as the Proton acceptor in the catalytic mechanism. Residues 89-93 (DSGGF), D143, Q188, and G215 each bind substrate. The interval 246-252 (GVGKPED) is RNA binding. The active-site Nucleophile is D265. Residues 270-274 (TRNAR) form an RNA binding; important for wobble base 34 recognition region. C303, C305, C308, and H334 together coordinate Zn(2+).

This sequence belongs to the queuine tRNA-ribosyltransferase family. As to quaternary structure, homodimer. Within each dimer, one monomer is responsible for RNA recognition and catalysis, while the other monomer binds to the replacement base PreQ1. Zn(2+) is required as a cofactor.

It carries out the reaction 7-aminomethyl-7-carbaguanine + guanosine(34) in tRNA = 7-aminomethyl-7-carbaguanosine(34) in tRNA + guanine. Its pathway is tRNA modification; tRNA-queuosine biosynthesis. Catalyzes the base-exchange of a guanine (G) residue with the queuine precursor 7-aminomethyl-7-deazaguanine (PreQ1) at position 34 (anticodon wobble position) in tRNAs with GU(N) anticodons (tRNA-Asp, -Asn, -His and -Tyr). Catalysis occurs through a double-displacement mechanism. The nucleophile active site attacks the C1' of nucleotide 34 to detach the guanine base from the RNA, forming a covalent enzyme-RNA intermediate. The proton acceptor active site deprotonates the incoming PreQ1, allowing a nucleophilic attack on the C1' of the ribose to form the product. After dissociation, two additional enzymatic reactions on the tRNA convert PreQ1 to queuine (Q), resulting in the hypermodified nucleoside queuosine (7-(((4,5-cis-dihydroxy-2-cyclopenten-1-yl)amino)methyl)-7-deazaguanosine). In Acinetobacter baumannii (strain SDF), this protein is Queuine tRNA-ribosyltransferase.